The sequence spans 352 residues: MIKVSVIGATGYAGAELIRLLLSHSKVELKNLSSKSFVGKNINEIYPNLNKNLDKLLLDENEIFEDTDVVFASLPAGLSDDIANKCFEKNILFIDLGADFRLDNEEDYKNWYGNEYKYKNLHKEAIYSIPEIIKYDNVYNKKELKNAKIIGNPGCYPTSIGLALAPALVNKFIIKDDIIIDSKSGATGAGRELKLNTHYTECNEAFAPYKIAEHRHTPEIEQTLSNIYGEDIKVTFVPHLLPLNRGIVSTIYAKLENKNIKLKDIHNTYKNFYKDSAFVRVLNIGEIANLKYVKYSNYCDISLHMDDRTNKLIIVSTIDNMVKGAAGQAIQNMNIALGLKEDEGLNFIPPAF.

Cysteine 155 is an active-site residue.

It belongs to the NAGSA dehydrogenase family. Type 1 subfamily.

Its subcellular location is the cytoplasm. The enzyme catalyses N-acetyl-L-glutamate 5-semialdehyde + phosphate + NADP(+) = N-acetyl-L-glutamyl 5-phosphate + NADPH + H(+). It participates in amino-acid biosynthesis; L-arginine biosynthesis; N(2)-acetyl-L-ornithine from L-glutamate: step 3/4. Functionally, catalyzes the NADPH-dependent reduction of N-acetyl-5-glutamyl phosphate to yield N-acetyl-L-glutamate 5-semialdehyde. This chain is N-acetyl-gamma-glutamyl-phosphate reductase, found in Brachyspira hyodysenteriae (strain ATCC 49526 / WA1).